The chain runs to 132 residues: MGALEPNAGAPNADGLAALLVFPKALIDVLPVLPVLVPNWGIPNAEVVVPPVIVFAVPKLGLPNALPPMLLVLAALFVKGLIPLVLERLGLAPDVNGLPKADITVESLLGSKFNDSLMSFCVKVQQFSVIVL.

The chain crosses the membrane as a helical span at residues 66-86 (LPPMLLVLAALFVKGLIPLVL).

The protein localises to the membrane. This is an uncharacterized protein from Saccharomyces cerevisiae (strain ATCC 204508 / S288c) (Baker's yeast).